The sequence spans 1062 residues: Cell division control protein 7 (1062 aa).

The Protein kinase domain occupies 9–259 (ITLGDCLGKG…TRKLLKHPWV (251 aa)). ATP contacts are provided by residues 15 to 23 (LGKGAFGAV) and lysine 38. Residue aspartate 131 is the Proton acceptor of the active site. 2 stretches are compositionally biased toward polar residues: residues 296–310 (NRIN…QSSY) and 376–394 (AFNS…SPLS). Disordered regions lie at residues 296-331 (NRIN…NWDN), 361-394 (NNSS…SPLS), and 1038-1062 (NEHK…PLTQ).

It belongs to the protein kinase superfamily. Ser/Thr protein kinase family. CDC7 subfamily. Interacts with spg1. Seems to interact with cdc11. Requires Mg(2+) as cofactor.

It carries out the reaction L-seryl-[protein] + ATP = O-phospho-L-seryl-[protein] + ADP + H(+). It catalyses the reaction L-threonyl-[protein] + ATP = O-phospho-L-threonyl-[protein] + ADP + H(+). Its function is as follows. Protein kinase essential for cell division. Plays a key role in initiation of septum formation and cytokinesis. This is Cell division control protein 7 (cdc7) from Schizosaccharomyces pombe (strain 972 / ATCC 24843) (Fission yeast).